The chain runs to 184 residues: Non-specific lipid transfer protein GPI-anchored 6 (184 aa).

An N-terminal signal peptide occupies residues 1 to 24; sequence MEKSTRTLFITIVITSMLLGFGNS. 4 disulfide bridges follow: Cys-33–Cys-74, Cys-43–Cys-58, Cys-59–Cys-101, and Cys-72–Cys-111. The tract at residues 138–158 is disordered; it reads NSTSPTQIHKDGTGGGKAEPV. Ser-160 is lipidated: GPI-anchor amidated serine. Residues 161 to 184 constitute a propeptide, removed in mature form; sequence NGWKEKSWLGVELLIYLLVSLIFF.

This sequence belongs to the plant LTP family. Preferentially expressed in the shoot apical meristem and the root meristem. Also present in the ovules and developing embryos. Observed in cotyledons, hypocotyls, flowers, leaves and siliques. Up-regulated in the epidermis of stems.

The protein localises to the cell membrane. Its function is as follows. Lipid transfer protein involved in seed and ovule maturation and development, probably by regulating the fatty acids homeostasis during suberin and sporopollenin biosynthesis or deposition. Contributes to pre-invasive defense against some non-host powdery mildew pathogens by preventing the penetration of the epidermal cell wall by the fungal agents (e.g. Blumeria graminis f. sp. hordei (Bgh)). The polypeptide is Non-specific lipid transfer protein GPI-anchored 6 (Arabidopsis thaliana (Mouse-ear cress)).